Reading from the N-terminus, the 213-residue chain is Orotate phosphoribosyltransferase (213 aa).

Lysine 26 contributes to the 5-phospho-alpha-D-ribose 1-diphosphate binding site. Residue 34–35 participates in orotate binding; sequence FF. 5-phospho-alpha-D-ribose 1-diphosphate is bound by residues 72–73, arginine 99, lysine 100, lysine 103, histidine 105, and 124–132; these read YK and DDVITAGTA. Residues threonine 128 and arginine 156 each contribute to the orotate site.

This sequence belongs to the purine/pyrimidine phosphoribosyltransferase family. PyrE subfamily. Homodimer. Mg(2+) is required as a cofactor.

It carries out the reaction orotidine 5'-phosphate + diphosphate = orotate + 5-phospho-alpha-D-ribose 1-diphosphate. It functions in the pathway pyrimidine metabolism; UMP biosynthesis via de novo pathway; UMP from orotate: step 1/2. Functionally, catalyzes the transfer of a ribosyl phosphate group from 5-phosphoribose 1-diphosphate to orotate, leading to the formation of orotidine monophosphate (OMP). The polypeptide is Orotate phosphoribosyltransferase (Salmonella arizonae (strain ATCC BAA-731 / CDC346-86 / RSK2980)).